A 1079-amino-acid chain; its full sequence is Electrogenic sodium bicarbonate cotransporter 1 (1079 aa).

The required for interaction with AHCYL1 stretch occupies residues 1 to 62; the sequence is MEDEAALDRG…EKKEKERVSE (62 aa). Over 1–466 the chain is Cytoplasmic; that stretch reads MEDEAALDRG…FASDFYDALN (466 aa). Tyr30 is subject to Phosphotyrosine. The segment covering 39 to 52 has biased composition (basic residues); sequence YRRRRRHKRKAGHR. The segment at 39-78 is disordered; that stretch reads YRRRRRHKRKAGHREKKEKERVSENYSDKSDVENADESSS. A compositionally biased stretch (basic and acidic residues) spans 53–70; sequence EKKEKERVSENYSDKSDV. 7 positions are modified to phosphoserine: Ser61, Ser65, Ser68, Ser223, Ser232, Ser233, and Ser245. A disordered region spans residues 238-265; that stretch reads FTSPENGSPAMTHRNLTSSSLNDISDKP. Phosphothreonine occurs at positions 249 and 254. The segment covering 251–260 has biased composition (polar residues); the sequence is RNLTSSSLND. Phosphoserine occurs at positions 256, 257, and 262. The chain crosses the membrane as a helical span at residues 467-491; sequence IQALSAILFIYLATVTNAITFGGLL. At 492 to 501 the chain is on the extracellular side; that stretch reads GDATDNMQGV. The helical transmembrane segment at 502–520 threads the bilayer; sequence LESFLGTAVSGAVFCLFAG. Residue Gln521 is a topological domain, cytoplasmic. A discontinuously helical transmembrane segment spans residues 522–542; it reads PLTILSSTGPVLVFERLLFNF. Residues 543 to 550 lie on the Extracellular side of the membrane; sequence SKDHNFDY. A helical membrane pass occupies residues 551 to 571; it reads LEFRLWIGLWSAFLCLILVAT. Over 572–585 the chain is Cytoplasmic; sequence DASFLVQYFTRFTE. Residues 586–609 traverse the membrane as a helical segment; sequence EGFSSLISFIFIYDAFKKMIKLAD. Residues 610-692 are Extracellular-facing; it reads YYPINSNFKV…GNNCDFVPDI (83 aa). A helical transmembrane segment spans residues 693–710; it reads TLMSFILFLGTYTSSMAL. Over 711 to 725 the chain is Cytoplasmic; that stretch reads KKFKTSRYFPTTARK. The chain crosses the membrane as a helical span at residues 726–745; the sequence is LISDFAIILSILIFCVIDAL. Residues 746 to 779 are Extracellular-facing; it reads VGVDTPKLIVPSEFKPTSPNRGWFVPPFGGNPWW. Residues 748–779 form an interaction with CA4 region; it reads VDTPKLIVPSEFKPTSPNRGWFVPPFGGNPWW. A helical transmembrane segment spans residues 780–807; the sequence is VYLAAAIPALLVTILIFMDQQITAVIVN. Topologically, residues 808–819 are cytoplasmic; that stretch reads RKEHKLKKGAGY. Residues 820–836 form a helical membrane-spanning segment; the sequence is HLDLFWVAILMVVCSFM. Ala837 is a topological domain (extracellular). Residues 838-855 traverse the membrane as a discontinuously helical segment; that stretch reads LPWYVAATVISIAHIDSL. Residues 856-877 are Cytoplasmic-facing; it reads KMETETSAPGEQPKFLGVREQR. The chain crosses the membrane as a helical span at residues 878 to 894; it reads VTGTLVFILTGLSVFMA. Topologically, residues 895 to 901 are extracellular; the sequence is PILKFIP. Residues 902 to 918 form a helical membrane-spanning segment; that stretch reads MPVLYGVFLYMGVASLN. Over 919–960 the chain is Cytoplasmic; the sequence is GVQFMDRLKLLLMPLKHQPDFIYLRHVPLRRVHLFTFLQVLC. The segment at residues 961 to 986 is an intramembrane region (discontinuously helical); that stretch reads LALLWILKSTVAAIIFPVMILALVAV. Residues 987 to 1079 are Cytoplasmic-facing; that stretch reads RKGMDYLFSQ…PTFLERHTSC (93 aa). A CA2-binding region spans residues 1002 to 1004; sequence LDD. Residues 1012-1079 are disordered; it reads KKKEDEKKKK…PTFLERHTSC (68 aa). Ser1026 is subject to Phosphoserine; by PKA. Ser1029 carries the post-translational modification Phosphoserine. The segment at 1030–1033 is CA2-binding; sequence DSDD. Ser1034 and Ser1044 each carry phosphoserine. Residues 1057–1059 are required for basolateral targeting; the sequence is FLS. Basic and acidic residues predominate over residues 1062-1079; that stretch reads KPSDRERSPTFLERHTSC. Ser1069 is subject to Phosphoserine.

This sequence belongs to the anion exchanger (TC 2.A.31) family. Homodimer. Interacts with CA2/carbonic anhydrase 2 and CA4/carbonic anhydrase 4 which may regulate transporter activity. Isoform 1 but not isoform 2 interacts with AHCYL1 (via PEST domain when phosphorylated); the interaction increases SLC4A4 isoform 1 activity. Interacts with AHCYL2. In terms of processing, phosphorylation of Ser-1026 by PKA increases the binding of CA2 and changes the Na(+):HCO3(-) stoichiometry of the transporter from 3:1 to 2:1. Phosphorylated in presence of STK39 and dephosphorylated in presence of PP1 phosphatase; phosphorylation seems to inhibit SLC4A4 activity. N-glycosylated. May not be necessary for the transporter basic functions. In terms of tissue distribution, expressed in vas deferens epithelia (at protein level).

Its subcellular location is the basolateral cell membrane. The protein resides in the cell membrane. The catalysed reaction is 2 hydrogencarbonate(out) + Na(+)(out) = 2 hydrogencarbonate(in) + Na(+)(in). It carries out the reaction 3 hydrogencarbonate(out) + Na(+)(out) = 3 hydrogencarbonate(in) + Na(+)(in). Functionally, electrogenic sodium/bicarbonate cotransporter with a Na(+):HCO3(-) stoichiometry varying from 1:2 to 1:3. May regulate bicarbonate influx/efflux at the basolateral membrane of cells and regulate intracellular pH. This Sus scrofa (Pig) protein is Electrogenic sodium bicarbonate cotransporter 1 (SLC4A4).